We begin with the raw amino-acid sequence, 261 residues long: Aromatic peroxygenase (261 aa).

Residue Cys-36 coordinates heme. Residues Asn-100, Asn-137, Asn-141, and Asn-220 are each glycosylated (N-linked (GlcNAc...) asparagine).

It belongs to the chloroperoxidase family. The cofactor is heme b. N-glycosylated.

Aromatic peroxidase that oxidizes aryl alcohols into the corresponding aldehydes and then into the corresponding benzoic acids. Catalyzes the regioselective peroxide-dependent hydroxylation of naphthalene to 1-naphthol and to a far lesser extent 2-naphthol via a naphthalene 1,2-oxide intermediate. Halogenates phenol to 2-bromophenol and 4-bromophenol. Oxidizes the sulfur-containing heterocycle dibenzothiophene to yield sulfoxidation products, and trace amounts of ring-hydroxylation products. This Coprinellus radians (Coprophilous mushroom) protein is Aromatic peroxygenase.